The primary structure comprises 279 residues: Fatty acid elongase 2 (279 aa).

Helical transmembrane passes span 16-36 (LMLENVDVLGYLSLGYLALVW), 61-81 (AIIVWNLLLSAFSFFGMIVVV), 112-132 (FWIGMFVLSKAPELVDTMFLL), 138-158 (PPFLHWYHHVTVLIFSWHTYC), 164-184 (MVLFAAMNLTVHFIMYFYFAM), 196-216 (FAPFITMLQILQMVVGSLVTT), and 242-262 (MGVIMYMSYLYLFSEMFLNSY). The short motif at 142–146 (HWYHH) is the HxxHH motif element. His145 serves as the catalytic Nucleophile.

The protein belongs to the ELO family.

The protein resides in the endoplasmic reticulum membrane. It carries out the reaction an acyl-CoA + malonyl-CoA + H(+) = a 3-oxoacyl-CoA + CO2 + CoA. It functions in the pathway lipid metabolism; fatty acid biosynthesis. Its function is as follows. Involved in the synthesis of fatty acids. Elongates C10 fatty acids to C14. Required for the maintenance of the global lipidome profile in this parasite. In Trypanosoma cruzi (strain CL Brener), this protein is Fatty acid elongase 2.